An 848-amino-acid polypeptide reads, in one-letter code: Transforming growth factor beta receptor type 3 (848 aa).

Positions 1-20 (MTLHCVVALFALISSCLATA) are cleaved as a signal peptide. The Extracellular portion of the chain corresponds to 21–784 (GPEPGVQCAL…IFHGLDTLTV (764 aa)). N-linked (GlcNAc...) asparagine glycans are attached at residues asparagine 34 and asparagine 141. The cysteines at positions 52 and 197 are disulfide-linked. The disordered stretch occupies residues 390–448 (SGEGAARHGGLPFPFPYIPRRGRQDGGKDRLPRPKDPVVPSIQLLPGPREPQEAQGSRD). Basic and acidic residues predominate over residues 411–425 (GRQDGGKDRLPRPKD). In terms of domain architecture, ZP spans 454–729 (RCDSEKMLVA…PKCVLPDEAC (276 aa)). Asparagine 491 carries an N-linked (GlcNAc...) asparagine glycan. Serine 529, serine 533, and serine 544 each carry an O-linked (Xyl...) (glycosaminoglycan) serine glycan. Residues asparagine 570, asparagine 589, and asparagine 696 are each glycosylated (N-linked (GlcNAc...) asparagine). Intrachain disulfides connect cysteine 638–cysteine 704, cysteine 659–cysteine 729, and cysteine 709–cysteine 722. Positions 736–750 (MIWAMMQNKKTFTKP) are interaction with TGF-beta ligand. The chain crosses the membrane as a helical span at residues 785 to 806 (MGIAFAAFVIGALLTGALWYIY). The Cytoplasmic segment spans residues 807 to 848 (SHTGDSAGRQPVPTSPPASENSSAAHSLGSTQSTPCSSSSAA). The disordered stretch occupies residues 813 to 848 (AGRQPVPTSPPASENSSAAHSLGSTQSTPCSSSSAA). A compositionally biased stretch (low complexity) spans 833-848 (SLGSTQSTPCSSSSAA). The residue at position 837 (threonine 837) is a Phosphothreonine.

In terms of assembly, forms homodimers and homooligomers. Interacts with DYNLT4. Interacts with integrin ITGA5:ITGB1; this interaction promotes the internalization and trafficking of ITGA5:ITGB1 into endocytic vesicles. Interacts with TGFB1, BMP2, BMP5, BMP7 or GDF5 and inhibin A via the ligand binding domains. Interacts with ALK3/BMPR1A; this interaction results in the cell surface retention of BMPR1A. Interacts with ALK6/BMPR1B; this interaction enhances BMPR1B-mediated stimulation of the BMP signaling pathway. Interacts with the scaffolding protein beta-arrestin2/ARRB2; this interaction mediates internalization of TGFBR3 and thus regulates migration, actin cytoskeleton and activation of CDC42. In terms of processing, extensively modified by glycosaminoglycan groups (GAG). Post-translationally, phosphorylated in the cytoplasmic domain by the type II receptor TGFBR2 at THR-837 to mediate recruitment of ARRB2 and subsequent internalization of TGFBR2 and TGFBR3.

Its subcellular location is the cell membrane. It localises to the secreted. The protein resides in the extracellular space. It is found in the extracellular matrix. Cell surface receptor that regulates diverse cellular processes including cell proliferation, differentiation, migration, and apoptosis. Initiates BMP, inhibin, and TGF-beta signaling pathways by interacting with different ligands including TGFB1, BMP2, BMP5, BMP7 or GDF5. Alternatively, acts as a cell surface coreceptor for BMP ligands, serving to enhance ligand binding by differentially regulating BMPR1A/ALK3 and BMPR1B/ALK6 receptor trafficking. Promotes epithelial cell adhesion, focal adhesion formation and integrin signaling during epithelial cell spreading on fibronectin. By interacting with the scaffolding protein beta-arrestin2/ARRB2, regulates migration or actin cytoskeleton and promotes the activation of CDC42 as well as the inhibition of NF-kappa-B. In gonadotrope cells, acts as an inhibin A coreceptor and regulates follicle-stimulating hormone (FSH) levels and female fertility. Plays a role in the inhibition of directed and random cell migration in epithelial cells by altering the actin cytoskeletal organization. Participates in epithelial-mesenchymal transformation (EMT) upon binding to BMP2 or TGFB2, by activating the PAR6/SMURF1/RHOA pathway. The chain is Transforming growth factor beta receptor type 3 (TGFBR3) from Sus scrofa (Pig).